We begin with the raw amino-acid sequence, 130 residues long: Phosphoribosyl-AMP cyclohydrolase (130 aa).

Mg(2+) is bound at residue D77. C78 is a binding site for Zn(2+). 2 residues coordinate Mg(2+): D79 and D81. Positions 95 and 102 each coordinate Zn(2+).

Belongs to the PRA-CH family. Homodimer. It depends on Mg(2+) as a cofactor. The cofactor is Zn(2+).

It is found in the cytoplasm. It catalyses the reaction 1-(5-phospho-beta-D-ribosyl)-5'-AMP + H2O = 1-(5-phospho-beta-D-ribosyl)-5-[(5-phospho-beta-D-ribosylamino)methylideneamino]imidazole-4-carboxamide. It participates in amino-acid biosynthesis; L-histidine biosynthesis; L-histidine from 5-phospho-alpha-D-ribose 1-diphosphate: step 3/9. Catalyzes the hydrolysis of the adenine ring of phosphoribosyl-AMP. In Pseudomonas syringae pv. syringae (strain B728a), this protein is Phosphoribosyl-AMP cyclohydrolase.